A 103-amino-acid chain; its full sequence is Large ribosomal subunit protein bL21 (103 aa).

The protein belongs to the bacterial ribosomal protein bL21 family. In terms of assembly, part of the 50S ribosomal subunit. Contacts protein L20.

In terms of biological role, this protein binds to 23S rRNA in the presence of protein L20. The polypeptide is Large ribosomal subunit protein bL21 (Nitrosospira multiformis (strain ATCC 25196 / NCIMB 11849 / C 71)).